Here is a 433-residue protein sequence, read N- to C-terminus: MTDFSPREIVSELDRFIVGQSDAKRAVSIALRNRWRRLQLEGALREEVLPKNILMIGPTGVGKTEIARRLAKLAGAPFIKVEATKFTEVGYVGRDVEQIIRDLVEVAIAQVREKKRKDVQARAQLAAEERVLDALVGASASPATRDSFRKKLRAGELNDKEIEVETQASSGSPMFEIPGMPGAQIGAVSLGDIFGKMGGRTKTRRLTVADSHEILVNEEADKLLDSDQLTIEAINAVENNGIVFLDEIDKICVRDGRSGGEVSREGVQRDLLPLIEGTTVSTKHGAVKTDHILFIASGAFHIAKPSDLLPELQGRLPIRVELNALSRDDMRRILTEPEVSLIKQYVALLGTEGVTLEFGDDAIDALADVAVQVNSTVENIGARRLQTVMERVLDEISFSAPDRSGETIRIDAEFVQKHVGDLAKNADLSRFIL.

ATP-binding positions include valine 18, 60-65 (GVGKTE), aspartate 246, glutamate 311, and arginine 383.

This sequence belongs to the ClpX chaperone family. HslU subfamily. In terms of assembly, a double ring-shaped homohexamer of HslV is capped on each side by a ring-shaped HslU homohexamer. The assembly of the HslU/HslV complex is dependent on binding of ATP.

Its subcellular location is the cytoplasm. In terms of biological role, ATPase subunit of a proteasome-like degradation complex; this subunit has chaperone activity. The binding of ATP and its subsequent hydrolysis by HslU are essential for unfolding of protein substrates subsequently hydrolyzed by HslV. HslU recognizes the N-terminal part of its protein substrates and unfolds these before they are guided to HslV for hydrolysis. The polypeptide is ATP-dependent protease ATPase subunit HslU (Rhodopseudomonas palustris (strain BisA53)).